The following is a 150-amino-acid chain: 3-hydroxyacyl-[acyl-carrier-protein] dehydratase FabZ (150 aa).

His-54 is a catalytic residue.

Belongs to the thioester dehydratase family. FabZ subfamily.

The protein localises to the cytoplasm. The catalysed reaction is a (3R)-hydroxyacyl-[ACP] = a (2E)-enoyl-[ACP] + H2O. In terms of biological role, involved in unsaturated fatty acids biosynthesis. Catalyzes the dehydration of short chain beta-hydroxyacyl-ACPs and long chain saturated and unsaturated beta-hydroxyacyl-ACPs. The protein is 3-hydroxyacyl-[acyl-carrier-protein] dehydratase FabZ of Aliivibrio fischeri (strain ATCC 700601 / ES114) (Vibrio fischeri).